Consider the following 165-residue polypeptide: MNFLKKLLPQVATEVQQLSRSGFHTSSVCCRVQSGRYRITTKRNRPLTYEMANPPHFIGHRKSWNSWNTSTMKDALRPSQTAIEDVFIRKFVTGTWHALVCSEVIIKRQHNTIRIAALIRQAITPRKMYFLIGYTEELLSYWMQCPVTLELQTVGDKKDVVFKYI.

The N-terminal 30 residues, 1–30, are a transit peptide targeting the mitochondrion; sequence MNFLKKLLPQVATEVQQLSRSGFHTSSVCC.

This sequence belongs to the universal ribosomal protein uS3 family. In terms of assembly, component of the mitochondrial ribosome small subunit (28S) which comprises a 12S rRNA and about 30 distinct proteins.

The protein resides in the mitochondrion. This Drosophila melanogaster (Fruit fly) protein is Small ribosomal subunit protein uS3m (mRpS24).